A 122-amino-acid polypeptide reads, in one-letter code: Large ribosomal subunit protein uL14 (122 aa).

It belongs to the universal ribosomal protein uL14 family. Part of the 50S ribosomal subunit. Forms a cluster with proteins L3 and L19. In the 70S ribosome, L14 and L19 interact and together make contacts with the 16S rRNA in bridges B5 and B8.

Functionally, binds to 23S rRNA. Forms part of two intersubunit bridges in the 70S ribosome. In Borreliella burgdorferi (strain ATCC 35210 / DSM 4680 / CIP 102532 / B31) (Borrelia burgdorferi), this protein is Large ribosomal subunit protein uL14.